A 189-amino-acid chain; its full sequence is Apolipoprotein D (189 aa).

Positions Met-1–Gly-20 are cleaved as a signal peptide. Gln-21 is modified (pyrrolidone carboxylic acid). 2 cysteine pairs are disulfide-bonded: Cys-28-Cys-134 and Cys-61-Cys-185. Asn-65 and Asn-98 each carry an N-linked (GlcNAc...) asparagine glycan.

This sequence belongs to the calycin superfamily. Lipocalin family. Homodimer. As to expression, highest levels of expression in brain, testis, virgin mammary gland and salivary gland. Moderate levels in skeletal muscle, lactating mammary gland and thymus. Low levels in lung and lymph node. No expression in kidney, pancreas, liver or spleen.

The protein resides in the secreted. Its function is as follows. APOD occurs in the macromolecular complex with lecithin-transport and binding of bilin. Appears to be able to transport a variety of ligands in a number of different contexts. The polypeptide is Apolipoprotein D (Apod) (Mus musculus (Mouse)).